Here is a 171-residue protein sequence, read N- to C-terminus: Co-chaperone protein HscB (171 aa).

The J domain maps to 2–74; that stretch reads DYFTLFGLPA…LMRAEYLLSL (73 aa).

It belongs to the HscB family. As to quaternary structure, interacts with HscA and stimulates its ATPase activity. Interacts with IscU.

Functionally, co-chaperone involved in the maturation of iron-sulfur cluster-containing proteins. Seems to help targeting proteins to be folded toward HscA. The sequence is that of Co-chaperone protein HscB from Escherichia coli (strain SE11).